A 572-amino-acid chain; its full sequence is Urease subunit alpha (572 aa).

The Urease domain maps to 134 to 572; the sequence is GGIDSHIHFI…LPLTQRYFLF (439 aa). Ni(2+)-binding residues include His139, His141, and Lys222. An N6-carboxylysine modification is found at Lys222. Substrate is bound at residue His224. Residues His251 and His277 each contribute to the Ni(2+) site. His325 serves as the catalytic Proton donor. Residue Asp365 coordinates Ni(2+).

The protein belongs to the metallo-dependent hydrolases superfamily. Urease alpha subunit family. As to quaternary structure, heterotrimer of UreA (gamma), UreB (beta) and UreC (alpha) subunits. Three heterotrimers associate to form the active enzyme. The cofactor is Ni cation. Carboxylation allows a single lysine to coordinate two nickel ions.

The protein resides in the cytoplasm. It catalyses the reaction urea + 2 H2O + H(+) = hydrogencarbonate + 2 NH4(+). It participates in nitrogen metabolism; urea degradation; CO(2) and NH(3) from urea (urease route): step 1/1. In Variovorax paradoxus (strain S110), this protein is Urease subunit alpha.